The sequence spans 88 residues: Small ribosomal subunit protein uS15 (88 aa).

Belongs to the universal ribosomal protein uS15 family. As to quaternary structure, part of the 30S ribosomal subunit. Forms a bridge to the 50S subunit in the 70S ribosome, contacting the 23S rRNA.

Its function is as follows. One of the primary rRNA binding proteins, it binds directly to 16S rRNA where it helps nucleate assembly of the platform of the 30S subunit by binding and bridging several RNA helices of the 16S rRNA. In terms of biological role, forms an intersubunit bridge (bridge B4) with the 23S rRNA of the 50S subunit in the ribosome. This is Small ribosomal subunit protein uS15 from Flavobacterium psychrophilum (strain ATCC 49511 / DSM 21280 / CIP 103535 / JIP02/86).